We begin with the raw amino-acid sequence, 140 residues long: uncharacterized protein (140 aa).

This is an uncharacterized protein from Acholeplasma phage L2 (Bacteriophage L2).